We begin with the raw amino-acid sequence, 315 residues long: Acetyl-coenzyme A carboxylase carboxyl transferase subunit alpha (315 aa).

Positions 40-293 (LQDKSKTLTE…REELSSQLAM (254 aa)) constitute a CoA carboxyltransferase C-terminal domain.

The protein belongs to the AccA family. As to quaternary structure, acetyl-CoA carboxylase is a heterohexamer composed of biotin carboxyl carrier protein (AccB), biotin carboxylase (AccC) and two subunits each of ACCase subunit alpha (AccA) and ACCase subunit beta (AccD).

It localises to the cytoplasm. It catalyses the reaction N(6)-carboxybiotinyl-L-lysyl-[protein] + acetyl-CoA = N(6)-biotinyl-L-lysyl-[protein] + malonyl-CoA. It participates in lipid metabolism; malonyl-CoA biosynthesis; malonyl-CoA from acetyl-CoA: step 1/1. Its function is as follows. Component of the acetyl coenzyme A carboxylase (ACC) complex. First, biotin carboxylase catalyzes the carboxylation of biotin on its carrier protein (BCCP) and then the CO(2) group is transferred by the carboxyltransferase to acetyl-CoA to form malonyl-CoA. This chain is Acetyl-coenzyme A carboxylase carboxyl transferase subunit alpha, found in Pseudomonas syringae pv. tomato (strain ATCC BAA-871 / DC3000).